A 554-amino-acid chain; its full sequence is uncharacterized protein (554 aa).

4 disordered regions span residues 1–127 (MTTH…NYND), 139–173 (IEDDEEYEEIGDEESSSGIGGDSEFNDSLNGSKAG), 293–395 (NNNN…PLSE), and 416–509 (FGFS…RKIR). Composition is skewed to low complexity over residues 9 to 30 (SSSNSSSNNINNNNNNNNNNNI), 46 to 55 (DPTSSSSPTN), and 63 to 125 (SNSN…LINY). Residues 139 to 153 (IEDDEEYEEIGDEES) are compositionally biased toward acidic residues. Residues 164 to 173 (NDSLNGSKAG) are compositionally biased toward polar residues. Low complexity-rich tracts occupy residues 293–387 (NNNN…CSSN), 416–449 (FGFSLSSPTTSSSNNSSNNNNNNNNSNQFFSSIS), and 461–484 (SPPLQSLQSIQPPISQLNNNNNNH). A compositionally biased stretch (basic residues) spans 485–508 (HNNHHQNHHHQNHNHQHHSKKRKI).

This is an uncharacterized protein from Dictyostelium discoideum (Social amoeba).